The chain runs to 351 residues: Cytochrome c biogenesis protein CcsA (351 aa).

Transmembrane regions (helical) follow at residues 17-37 (VLFL…LPAI), 38-58 (NALG…LLGA), 68-88 (LSNL…VHLI), 97-117 (LVGV…TLTL), 143-163 (MMLS…FLVI), 259-279 (IIGL…VWAN), 286-306 (WSWD…AAYL), and 320-340 (AILA…VNLL).

The protein belongs to the CcmF/CycK/Ccl1/NrfE/CcsA family. In terms of assembly, may interact with ccs1.

The protein localises to the cellular thylakoid membrane. In terms of biological role, required during biogenesis of c-type cytochromes (cytochrome c6 and cytochrome f) at the step of heme attachment. In Nostoc sp. (strain PCC 7120 / SAG 25.82 / UTEX 2576), this protein is Cytochrome c biogenesis protein CcsA.